A 463-amino-acid chain; its full sequence is Regulator of microtubule dynamics protein 3 (463 aa).

Topologically, residues 1–4 (MSKL) are mitochondrial intermembrane. A helical transmembrane segment spans residues 5 to 27 (ILSYRIGLGLVVGAAAGAVIYIV). Over 28-463 (FRRNRKKTRK…PATAEEELLV (436 aa)) the chain is Cytoplasmic. The FFAT motif lies at 146-161 (IYFTATSGAAHTDAES). Residues 153 to 192 (GAAHTDAESEGGYSTAYAESDFERESSRASEAEEEDEVSC) are disordered. The span at 173 to 183 (DFERESSRASE) shows a compositional bias: basic and acidic residues. Residues 279-302 (AEDAQEKKSFASEGKEEAEAALQK) are a coiled coil.

The protein belongs to the RMDN family. As to quaternary structure, interacts with PTPN2. Interacts with microtubules. Interacts with VAPB. Interacts (FFAT motif) with MOSPD2 (via MSP domain).

It localises to the mitochondrion outer membrane. The protein resides in the cytoplasm. The protein localises to the nucleus. Its subcellular location is the cytoskeleton. It is found in the spindle. It localises to the spindle pole. In terms of biological role, involved in cellular calcium homeostasis regulation. This Xenopus laevis (African clawed frog) protein is Regulator of microtubule dynamics protein 3 (rmdn3).